The sequence spans 1411 residues: MLRRILQRTPGRVGSQGSDLDSSATPINTVDVNNESSSEGFICPQCMKSLGSADELFKHYEAVHDAGNDSGHGGESNLALKRDDVTLLRQEVQDLQASLKEEKWYSEELKKELEKYQGLQQQEAKPDGLVTDSSAELQSLEQQLEEAQTENFNIKQMKDLFEQKAAQLATEIADIKSKYDEERSLREAAEQKVTRLTEELNKEATVIQDLKTELLQRPGIEDVAVLKKELVQVQTLMDNMTLERERESEKLKDECKKLQSQYASSEATISQLRSELAKGPQEVAVYVQELQKLKSSVNELTQKNQTLTENLLKKEQDYTKLEEKHNEESVSKKNIQATLHQKDLDCQQLQSRLSASETSLHRIHVELSEKGEATQKLKEELSEVETKYQHLKAEFKQLQQQREEKEQHGLQLQSEINQLHSKLLETERQLGEAHGRLKEQRQLSSEKLMDKEQQVADLQLKLSRLEEQLKEKVTNSTELQHQLDKTKQQHQEQQALQQSTTAKLREAQNDLEQVLRQIGDKDQKIQNLEALLQKSKENISLLEKEREDLYAKIQAGEGETAVLNQLQEKNHTLQEQVTQLTEKLKNQSESHKQAQENLHDQVQEQKAHLRAAQDRVLSLETSVNELNSQLNESKEKVSQLDIQIKAKTELLLSAEAAKTAQRADLQNHLDTAQNALQDKQQELNKITTQLDQVTAKLQDKQEHCSQLESHLKEYKEKYLSLEQKTEELEGQIKKLEADSLEVKASKEQALQDLQQQRQLNTDLELRATELSKQLEMEKEIVSSTRLDLQKKSEALESIKQKLTKQEEEKKILKQDFETLSQETKIQHEELNNRIQTTVTELQKVKMEKEALMTELSTVKDKLSKVSDSLKNSKSEFEKENQKGKAAILDLEKTCKELKHQLQVQMENTLKEQKELKKSLEKEKEASHQLKLELNSMQEQLIQAQNTLKQNEKEEQQLQGNINELKQSSEQKKKQIEALQGELKIAVLQKTELENKLQQQLTQAAQELAAEKEKISVLQNNYEKSQETFKQLQSDFYGRESELLATRQDLKSVEEKLSLAQEDLISNRNQIGNQNKLIQELKTAKATLEQDSAKKEQQLQERCKALQDIQKEKSLKEKELVNEKSKLAEIEEIKCRQEKEITKLNEELKSHKLESIKEITNLKDAKQLLIQQKLELQGKADSLKAAVEQEKRNQQILKDQVKKEEEELKKEFIEKEAKLHSEIKEKEVGMKKHEENEAKLTMQITALNENLGTVKKEWQSSQRRVSELEKQTDDLRGEIAVLEATVQNNQDERRALLERCLKGEGEIEKLQTKVLELQRKLDNTTAAVQELGRENQSLQIKHTQALNRKWAEDNEVQNCMACGKGFSVTVRRHHCRQCGNIFCAECSAKNALTPSSKKPVRVCDACFNDLQG.

Residues 1-27 are disordered; sequence MLRRILQRTPGRVGSQGSDLDSSATPI. The span at 15 to 27 shows a compositional bias: polar residues; that stretch reads SQGSDLDSSATPI. A C2H2-type zinc finger spans residues 41-64; the sequence is FICPQCMKSLGSADELFKHYEAVH. Phosphoserine occurs at positions 52 and 70. Residues 74 to 1348 are a coiled coil; it reads GESNLALKRD…IKHTQALNRK (1275 aa). Residues 473–501 are disordered; it reads VTNSTELQHQLDKTKQQHQEQQALQQSTT. A compositionally biased stretch (basic and acidic residues) spans 481–490; that stretch reads HQLDKTKQQH. The segment at 1352–1410 adopts an FYVE-type zinc-finger fold; the sequence is DNEVQNCMACGKGFSVTVRRHHCRQCGNIFCAECSAKNALTPSSKKPVRVCDACFNDLQ. Residues cysteine 1358, cysteine 1361, cysteine 1374, cysteine 1377, cysteine 1382, cysteine 1385, cysteine 1402, and cysteine 1405 each coordinate Zn(2+).

Homodimer. Binds STX6. Binds RAB5A, RAB5B, RAB5C and RAB22A that have been activated by GTP-binding. Interacts with RAB31. Interacts with ERBB2. Interacts with SAMD9 and SAMD9L. May interact with PLEKHF2.

The protein localises to the cytoplasm. Its subcellular location is the early endosome membrane. Functionally, binds phospholipid vesicles containing phosphatidylinositol 3-phosphate and participates in endosomal trafficking. The chain is Early endosome antigen 1 (EEA1) from Homo sapiens (Human).